The following is a 324-amino-acid chain: 3'-5' exoribonuclease YhaM (324 aa).

The HD domain maps to 163 to 279; the sequence is HVVSMLELAK…LHYIDNLDAK (117 aa).

Belongs to the YhaM family.

In terms of biological role, shows a 3'-5' exoribonuclease activity. The protein is 3'-5' exoribonuclease YhaM of Geobacillus sp. (strain WCH70).